A 264-amino-acid chain; its full sequence is NAD-capped RNA hydrolase NudC (264 aa).

R70 contacts substrate. Zn(2+) contacts are provided by C99 and C102. E112 provides a ligand contact to substrate. The Zn(2+) site is built by C117 and C122. A substrate-binding site is contributed by Y127. The Nudix hydrolase domain maps to 128–252 (PVICPCIIVA…TIALKLIEHT (125 aa)). The a divalent metal cation site is built by A161, E177, and E181. The short motif at 162 to 183 (GFVEVGETFEQAVHREVLEETG) is the Nudix box element. A substrate-binding site is contributed by 195 to 202 (QPWAFPNS). An a divalent metal cation-binding site is contributed by E222. A245 is a binding site for substrate.

This sequence belongs to the Nudix hydrolase family. NudC subfamily. In terms of assembly, homodimer. It depends on Mg(2+) as a cofactor. Mn(2+) serves as cofactor. Requires Zn(2+) as cofactor.

It catalyses the reaction a 5'-end NAD(+)-phospho-ribonucleoside in mRNA + H2O = a 5'-end phospho-adenosine-phospho-ribonucleoside in mRNA + beta-nicotinamide D-ribonucleotide + 2 H(+). The catalysed reaction is NAD(+) + H2O = beta-nicotinamide D-ribonucleotide + AMP + 2 H(+). It carries out the reaction NADH + H2O = reduced beta-nicotinamide D-ribonucleotide + AMP + 2 H(+). Functionally, mRNA decapping enzyme that specifically removes the nicotinamide adenine dinucleotide (NAD) cap from a subset of mRNAs by hydrolyzing the diphosphate linkage to produce nicotinamide mononucleotide (NMN) and 5' monophosphate mRNA. The NAD-cap is present at the 5'-end of some mRNAs and stabilizes RNA against 5'-processing. Has preference for mRNAs with a 5'-end purine. Catalyzes the hydrolysis of a broad range of dinucleotide pyrophosphates. The sequence is that of NAD-capped RNA hydrolase NudC from Pasteurella multocida (strain Pm70).